Consider the following 862-residue polypeptide: C-type lectin domain-containing protein 161 (862 aa).

The N-terminal stretch at 1-20 (MYRRTTLWFLLLFQPILVFA) is a signal peptide. Residues Asn-22 and Asn-91 are each glycosylated (N-linked (GlcNAc...) asparagine). Residues 41-154 (SLNACFKLYN…VGQKLPFVCT (114 aa)) form the C-type lectin 1 domain. A disulfide bridge connects residues Cys-62 and Cys-153. The disordered stretch occupies residues 162–291 (AGPAPVHAMR…SDESSDEAYD (130 aa)). The span at 198–218 (SDKKEKKEVASDKKKESKKDE) shows a compositional bias: basic and acidic residues. Asn-222 carries N-linked (GlcNAc...) asparagine glycosylation. Positions 242–252 (SDKKESSKKDE) are enriched in basic and acidic residues. N-linked (GlcNAc...) asparagine glycans are attached at residues Asn-258, Asn-279, and Asn-352. Over residues 265 to 283 (ANAEMSASISASSANSSSD) the composition is skewed to low complexity. Disordered stretches follow at residues 377–437 (MTMR…SASL), 450–469 (ALAS…QKSA), and 474–504 (AVVS…IDES). The segment covering 388–418 (SSSNTDSESASISESSQASEQAVMAAAMSAK) has biased composition (low complexity). 2 stretches are compositionally biased toward basic and acidic residues: residues 455 to 467 (SKSD…KDQK) and 478 to 491 (ENKH…DPKS). Asn-559 carries an N-linked (GlcNAc...) asparagine glycan. C-type lectin domains follow at residues 562 to 687 (APAL…SVLC) and 716 to 828 (KNGK…FVSV). Cysteines 653 and 678 form a disulfide. N-linked (GlcNAc...) asparagine glycosylation occurs at Asn-765. Cysteines 807 and 819 form a disulfide. Residues Asn-831 and Asn-857 are each glycosylated (N-linked (GlcNAc...) asparagine).

The protein resides in the secreted. The polypeptide is C-type lectin domain-containing protein 161 (clec-161) (Caenorhabditis elegans).